We begin with the raw amino-acid sequence, 121 residues long: Flagellar protein FliT (121 aa).

Positions 1–50 (MNNAPHLYFAWQQLVEKSQLMLRLATEEQWDELIASEMAYVNAVQEIAHL) are required for homodimerization. Residues 60–98 (MQEQLRPMLHLILDNESKVKQLLQIRMDELAKLVGQSSV) are fliD binding.

It belongs to the FliT family. Homodimer. Interacts with FliD and FlhC.

It localises to the cytoplasm. Its subcellular location is the cytosol. In terms of biological role, dual-function protein that regulates the transcription of class 2 flagellar operons and that also acts as an export chaperone for the filament-capping protein FliD. As a transcriptional regulator, acts as an anti-FlhDC factor; it directly binds FlhC, thus inhibiting the binding of the FlhC/FlhD complex to class 2 promoters, resulting in decreased expression of class 2 flagellar operons. As a chaperone, effects FliD transition to the membrane by preventing its premature polymerization, and by directing it to the export apparatus. This chain is Flagellar protein FliT, found in Escherichia coli O17:K52:H18 (strain UMN026 / ExPEC).